A 244-amino-acid chain; its full sequence is Complement C1q subcomponent subunit A (244 aa).

Residues 1–22 (MEAPRGWLVISVLAISLASSVT) form the signal peptide. A disordered region spans residues 28–94 (APDGTHGSAG…PGPSGPMGPA (67 aa)). Residues 31 to 109 (GTHGSAGIPG…KGTKGSPGNI (79 aa)) enclose the Collagen-like domain. 4-hydroxyproline occurs at positions 39 and 45. K48 is subject to 5-hydroxylysine. K48 is a glycosylation site (O-linked (Gal...) hydroxylysine). P54 and P57 each carry 4-hydroxyproline. The residue at position 67 (K67) is a 5-hydroxylysine. A glycan (O-linked (Gal...) hydroxylysine) is linked at K67. 3 positions are modified to 4-hydroxyproline: P73, P79, and P85. Residues 79–94 (PGRMGYPGPSGPMGPA) show a composition bias toward low complexity. K100 is subject to 5-hydroxylysine. K100 is a glycosylation site (O-linked (Gal...) hydroxylysine). The region spanning 110–244 (KDQPRPAFSA…FSGFLIFPSA (135 aa)) is the C1q domain. The N-linked (GlcNAc...) asparagine glycan is linked to N146. C172 and C189 are disulfide-bonded. Q198 is a binding site for Ca(2+).

In terms of assembly, core component of the complement C1 complex, a calcium-dependent complex composed of 1 molecule of the C1Q subcomplex, 2 molecules of C1R and 2 molecules of C1S. The C1Q subcomplex is composed 18 subunits: 3 chains of C1QA, C1QB, and C1QC trimerize to form 6 collagen-like triple helices connected to six globular ligand-recognition modules (C1q domain). Interacts with CR1 (via Sushi 24 and Sushi 25 domains). Interacts (via C-terminus) with CD33; this interaction activates CD33 inhibitory motifs. Post-translationally, O-linked glycans are assumed to be the Glc-Gal disaccharides typically found as secondary modifications of hydroxylated lysines in collagen-like domains.

It is found in the secreted. The protein localises to the cell surface. Its activity is regulated as follows. The C1Q subcomplex is inhibited by sulfated molecules, such as triterpenoid sulfates, heparan sulfate, or chondroitin sulfates. Functionally, core component of the complement C1 complex, a multiprotein complex that initiates the classical pathway of the complement system, a cascade of proteins that leads to phagocytosis and breakdown of pathogens and signaling that strengthens the adaptive immune system. The classical complement pathway is initiated by the C1Q subcomplex of the C1 complex, which specifically binds IgG or IgM immunoglobulins complexed with antigens, forming antigen-antibody complexes on the surface of pathogens: C1QA, together with C1QB and C1QC, specifically recognizes and binds the Fc regions of IgG or IgM via its C1q domain. Immunoglobulin-binding activates the proenzyme C1R, which cleaves C1S, initiating the proteolytic cascade of the complement system. The C1Q subcomplex is activated by a hexamer of IgG complexed with antigens, while it is activated by a pentameric IgM. The C1Q subcomplex also recognizes and binds phosphatidylserine exposed on the surface of cells undergoing programmed cell death, possibly promoting activation of the complement system. The chain is Complement C1q subcomponent subunit A (C1QA) from Bos taurus (Bovine).